Here is a 165-residue protein sequence, read N- to C-terminus: V-type proton ATPase 16 kDa proteolipid subunit (165 aa).

Residues 1–12 lie on the Lumenal side of the membrane; sequence MSTVFNGDETAP. A helical membrane pass occupies residues 13–33; that stretch reads FFGFLGAAAALVFSCMGAAYG. The Cytoplasmic segment spans residues 34–55; it reads TAKSGVGVASMGVMRPELVMKS. The helical transmembrane segment at 56 to 76 threads the bilayer; it reads IVPVVMAGVLGIYGLIIAVII. At 77-95 the chain is on the lumenal side; it reads STGINPKAKSYYLFDGYAH. The helical transmembrane segment at 96–117 threads the bilayer; it reads LSSGLACGLAGLSAGMAIGIVG. Over 118 to 129 the chain is Cytoplasmic; the sequence is DAGVRANAQQPK. A helical membrane pass occupies residues 130–155; the sequence is LFVGMILILIFAEALALYGLIVGIIL. The Lumenal portion of the chain corresponds to 156 to 165; that stretch reads SSRAGQSRAD.

The protein belongs to the V-ATPase proteolipid subunit family. As to quaternary structure, V-ATPase is a heteromultimeric enzyme composed of a peripheral catalytic V1 complex (main components: subunits A, B, C, D, E, and F) attached to an integral membrane V0 proton pore complex (main component: the proteolipid protein; which is present as a hexamer that forms the proton-conducting pore).

It is found in the vacuole membrane. In terms of biological role, proton-conducting pore forming subunit of the membrane integral V0 complex of vacuolar ATPase. V-ATPase is responsible for acidifying a variety of intracellular compartments in eukaryotic cells. The sequence is that of V-type proton ATPase 16 kDa proteolipid subunit (VMAC1) from Mesembryanthemum crystallinum (Common ice plant).